A 473-amino-acid polypeptide reads, in one-letter code: Sulfate adenylyltransferase subunit 1 (473 aa).

Residues 19-238 (KTLLKFLTCG…IKIKNSISSE (220 aa)) form the tr-type G domain. The G1 stretch occupies residues 28-35 (GSVDDGKS). 28–35 (GSVDDGKS) provides a ligand contact to GTP. Residues 86–90 (GITID) are G2. A G3 region spans residues 107-110 (DTPG). GTP contacts are provided by residues 107–111 (DTPGH) and 162–165 (NKMD). The G4 stretch occupies residues 162 to 165 (NKMD). Residues 200 to 202 (SAL) form a G5 region.

It belongs to the TRAFAC class translation factor GTPase superfamily. Classic translation factor GTPase family. CysN/NodQ subfamily. As to quaternary structure, heterodimer composed of CysD, the smaller subunit, and CysN.

It carries out the reaction sulfate + ATP + H(+) = adenosine 5'-phosphosulfate + diphosphate. Its pathway is sulfur metabolism; hydrogen sulfide biosynthesis; sulfite from sulfate: step 1/3. Its function is as follows. With CysD forms the ATP sulfurylase (ATPS) that catalyzes the adenylation of sulfate producing adenosine 5'-phosphosulfate (APS) and diphosphate, the first enzymatic step in sulfur assimilation pathway. APS synthesis involves the formation of a high-energy phosphoric-sulfuric acid anhydride bond driven by GTP hydrolysis by CysN coupled to ATP hydrolysis by CysD. In Buchnera aphidicola subsp. Acyrthosiphon pisum (strain Tuc7), this protein is Sulfate adenylyltransferase subunit 1.